Consider the following 77-residue polypeptide: Putative defensin-like protein 60 (77 aa).

A signal peptide spans 1–25 (MKMNITKSYVILFLVVVMTNSLSNS). 4 disulfide bridges follow: Cys41–Cys75, Cys45–Cys68, Cys54–Cys73, and Cys58–Cys74.

This sequence belongs to the DEFL family.

It is found in the secreted. This is Putative defensin-like protein 60 from Arabidopsis thaliana (Mouse-ear cress).